The chain runs to 534 residues: Multicopper oxidase LPR1 homolog 3 (534 aa).

Residues His-84 and His-86 each contribute to the Cu cation site. Asn-109 is a glycosylation site (N-linked (GlcNAc...) asparagine). His-133 and His-135 together coordinate Cu cation. A Plastocyanin-like domain is found at 219-291; that stretch reads PFQAVQRRRY…VDFSLVVNPN (73 aa). Residues Asn-234, Asn-291, Asn-312, Asn-323, Asn-341, and Asn-372 are each glycosylated (N-linked (GlcNAc...) asparagine). Residues His-419, His-422, and His-424 each contribute to the Cu cation site. The N-linked (GlcNAc...) asparagine glycan is linked to Asn-450. Cu cation contacts are provided by His-515, Cys-516, His-517, His-521, and Met-526.

This sequence belongs to the multicopper oxidase family. Cu cation is required as a cofactor. As to expression, expressed in roots and basal stems.

It is found in the endoplasmic reticulum membrane. Functionally, multicopper oxidase that may play a role in the maintenance of inorganic phosphate homeostasis. This chain is Multicopper oxidase LPR1 homolog 3, found in Oryza sativa subsp. japonica (Rice).